The following is a 336-amino-acid chain: Glycerol-3-phosphate dehydrogenase [NAD(P)+] (336 aa).

4 residues coordinate NADPH: Ser-11, Trp-12, Arg-32, and Lys-106. Sn-glycerol 3-phosphate is bound by residues Lys-106 and Gly-136. Ala-140 is an NADPH binding site. Positions 191, 244, 254, 255, and 256 each coordinate sn-glycerol 3-phosphate. The active-site Proton acceptor is Lys-191. Position 255 (Arg-255) interacts with NADPH. 2 residues coordinate NADPH: Val-279 and Glu-281.

It belongs to the NAD-dependent glycerol-3-phosphate dehydrogenase family.

It is found in the cytoplasm. The enzyme catalyses sn-glycerol 3-phosphate + NAD(+) = dihydroxyacetone phosphate + NADH + H(+). The catalysed reaction is sn-glycerol 3-phosphate + NADP(+) = dihydroxyacetone phosphate + NADPH + H(+). Its pathway is membrane lipid metabolism; glycerophospholipid metabolism. Catalyzes the reduction of the glycolytic intermediate dihydroxyacetone phosphate (DHAP) to sn-glycerol 3-phosphate (G3P), the key precursor for phospholipid synthesis. The sequence is that of Glycerol-3-phosphate dehydrogenase [NAD(P)+] from Frankia casuarinae (strain DSM 45818 / CECT 9043 / HFP020203 / CcI3).